A 39-amino-acid chain; its full sequence is Potassium channel toxin alpha-KTx 2.16 (39 aa).

Cystine bridges form between cysteine 7/cysteine 29, cysteine 13/cysteine 34, and cysteine 17/cysteine 36. Isoleucine 39 bears the Isoleucine amide mark.

It belongs to the short scorpion toxin superfamily. Potassium channel inhibitor family. Alpha-KTx 02 subfamily. In terms of tissue distribution, expressed by the venom gland.

Its subcellular location is the secreted. Blocks human voltage-gated potassium channels Kv1.2/KCNA2 (IC(50)=0.7 nM), Kv1.3/KCNA3 (IC(50)=26.2 nM) and blocks intermediate conductance calcium-activated potassium channel KCa3.1/KCNN4 (IC(50)=56 nM). In Centruroides tecomanus (Scorpion), this protein is Potassium channel toxin alpha-KTx 2.16.